The following is a 333-amino-acid chain: MQHNQLLEQLYSGHSLSTSESTALFNAVIQGELSNEQIAAMLIALKVREANTEEITGAVAASLQNAKVFPRPDYPFADIVGTGGDGQNTINISTASAIVAASMGAKVAKHGNRSVSSKSGASDVLTALGVNVNVTPEQARQALDEIGVCFLFAQQYHSGFRHVAPVRTALKTHTIFNILGPLINPARPTYHLLGVYAPELVKTYAETAVALEHQHSFVVHGSGLDEVALHGETQVAEIKNGKIEYFTLTPEDFGLKTQSLESLRGGEPQENTQYLTALLQGKGKAEHANAVAANTALLLKLFGYDDLKQNVQNVLAHLASGNAFKTLQKLTTY.

5-phospho-alpha-D-ribose 1-diphosphate contacts are provided by residues G81, 84-85, T89, 91-94, 109-117, and A121; these read GD, NIST, and KHGNRSVSS. Residue G81 participates in anthranilate binding. A Mg(2+)-binding site is contributed by S93. Residue N112 participates in anthranilate binding. Anthranilate is bound at residue R167. Mg(2+)-binding residues include D225 and E226.

The protein belongs to the anthranilate phosphoribosyltransferase family. In terms of assembly, homodimer. It depends on Mg(2+) as a cofactor.

The enzyme catalyses N-(5-phospho-beta-D-ribosyl)anthranilate + diphosphate = 5-phospho-alpha-D-ribose 1-diphosphate + anthranilate. Its pathway is amino-acid biosynthesis; L-tryptophan biosynthesis; L-tryptophan from chorismate: step 2/5. Catalyzes the transfer of the phosphoribosyl group of 5-phosphorylribose-1-pyrophosphate (PRPP) to anthranilate to yield N-(5'-phosphoribosyl)-anthranilate (PRA). This Haemophilus influenzae (strain 86-028NP) protein is Anthranilate phosphoribosyltransferase.